The sequence spans 754 residues: Disintegrin and metalloproteinase domain-containing protein 32 (754 aa).

Positions 1–22 are cleaved as a signal peptide; the sequence is MLGAMLHTLLLLLLAELGALLA. S23 carries the phosphoserine modification. Positions 23-176 are excised as a propeptide; that stretch reads SGPESQSSFL…TNYGILINKK (154 aa). N126 is a glycosylation site (N-linked (GlcNAc...) asparagine). Residues 177–689 are Extracellular-facing; that stretch reads PKSPFKNLFP…ERASKNQEKK (513 aa). Residues 187–384 enclose the Peptidase M12B domain; it reads LYLEMSIVVD…EGAKCLQNKP (198 aa). Disulfide bonds link C296/C379, C338/C363, C340/C345, and C454/C475. Residues N362, N469, N570, and N571 are each glycosylated (N-linked (GlcNAc...) asparagine). The 93-residue stretch at 391–483 folds into the Disintegrin domain; the sequence is AAVCGNGKVE…NCPPDVTINN (93 aa). Residues 628–660 form the EGF-like domain; sequence QSKTCSSKCHGNGVCNSHGVCHCNAGYSPPNCQ. Cystine bridges form between C632–C642, C636–C648, and C650–C659. Residues 690–710 form a helical membrane-spanning segment; it reads WLLSLYIVLIILASVFLIGTG. The Cytoplasmic portion of the chain corresponds to 711–754; the sequence is WKGLKQCGSKEEESMSSESKSEDSTYTYVSRSTSETSSMTSTSS. Residues 720-733 are compositionally biased toward basic and acidic residues; it reads KEEESMSSESKSED. The interval 720–754 is disordered; that stretch reads KEEESMSSESKSEDSTYTYVSRSTSETSSMTSTSS. Residues 734-754 show a composition bias toward low complexity; it reads STYTYVSRSTSETSSMTSTSS.

In terms of tissue distribution, expressed in sperm (at protein level). Highly expressed in the testis and weakly expressed in the epididymis, brain and heart.

It localises to the membrane. Its function is as follows. May play a role in sperm development and fertilization This is a non-catalytic metalloprotease-like protein. The chain is Disintegrin and metalloproteinase domain-containing protein 32 from Mus musculus (Mouse).